A 305-amino-acid chain; its full sequence is tRNA uridine(34) hydroxylase (305 aa).

One can recognise a Rhodanese domain in the interval 136–230; that stretch reads ADENTVVVDK…YLEEVPREQS (95 aa). Cysteine 190 (cysteine persulfide intermediate) is an active-site residue.

Belongs to the TrhO family.

It carries out the reaction uridine(34) in tRNA + AH2 + O2 = 5-hydroxyuridine(34) in tRNA + A + H2O. In terms of biological role, catalyzes oxygen-dependent 5-hydroxyuridine (ho5U) modification at position 34 in tRNAs. The protein is tRNA uridine(34) hydroxylase of Brucella melitensis biotype 1 (strain ATCC 23456 / CCUG 17765 / NCTC 10094 / 16M).